A 184-amino-acid polypeptide reads, in one-letter code: Photosystem I assembly protein Ycf4 (184 aa).

A run of 2 helical transmembrane segments spans residues 21–43 (NFCW…FSSY) and 58–80 (LFIP…SFYL).

This sequence belongs to the Ycf4 family.

The protein localises to the plastid. The protein resides in the chloroplast thylakoid membrane. Its function is as follows. Seems to be required for the assembly of the photosystem I complex. This Marchantia polymorpha (Common liverwort) protein is Photosystem I assembly protein Ycf4.